Here is a 173-residue protein sequence, read N- to C-terminus: Peptidoglycan-associated lipoprotein (173 aa).

Residues 1–21 form the signal peptide; sequence MKSKKIFKILTLLLPMITTFS. Cys-22 carries N-palmitoyl cysteine lipidation. Residue Cys-22 is the site of S-diacylglycerol cysteine attachment. Residues 59–173 enclose the OmpA-like domain; the sequence is ETLEKLKKGN…KNRRSVIIYQ (115 aa).

It belongs to the Pal lipoprotein family.

Its subcellular location is the cell outer membrane. The sequence is that of Peptidoglycan-associated lipoprotein from Buchnera aphidicola subsp. Baizongia pistaciae (strain Bp).